Here is a 235-residue protein sequence, read N- to C-terminus: Isoprenyl transferase (235 aa).

Aspartate 21 is a catalytic residue. Aspartate 21 contributes to the Mg(2+) binding site. Residues 22–25 (GNAR), tryptophan 26, lysine 34, histidine 38, and 66–68 (SSE) contribute to the substrate site. The active-site Proton acceptor is asparagine 69. Residues tryptophan 70, arginine 72, arginine 183, and 189-191 (RIS) each bind substrate. Glutamate 202 is a Mg(2+) binding site.

Belongs to the UPP synthase family. In terms of assembly, homodimer. Mg(2+) serves as cofactor.

Its function is as follows. Catalyzes the condensation of isopentenyl diphosphate (IPP) with allylic pyrophosphates generating different type of terpenoids. The polypeptide is Isoprenyl transferase (Rickettsia felis (strain ATCC VR-1525 / URRWXCal2) (Rickettsia azadi)).